The sequence spans 1346 residues: G-protein coupled receptor-associated sorting protein 1 (1346 aa).

3 disordered regions span residues methionine 1–glutamate 101, threonine 144–proline 177, and alanine 192–threonine 258. Low complexity predominate over residues glutamate 21 to valine 36. Positions phenylalanine 211 to methionine 226 are enriched in basic residues. Position 295 is a phosphoserine (serine 295). Disordered stretches follow at residues glutamate 311–glutamate 399 and valine 461–methionine 485. Basic residues predominate over residues arginine 316 to alanine 333. 2 stretches are compositionally biased toward basic and acidic residues: residues aspartate 347–alanine 361 and lysine 370–glutamate 399. The span at valine 461–serine 484 shows a compositional bias: polar residues. Phosphoserine occurs at positions 619 and 626. The residue at position 860 (threonine 860) is a Phosphothreonine. Residue serine 862 is modified to Phosphoserine. The tract at residues alanine 984–tryptophan 1004 is disordered. Positions serine 990–serine 1003 are enriched in basic and acidic residues.

Belongs to the GPRASP family. As to quaternary structure, interacts with cytoplasmic tails of a variety of G-protein coupled receptors such as delta opioid receptor/OPRD1, beta-2 adrenergic receptor/ADRB2 and D4 dopamine receptor/DRD4. Interacts with BECN2; the interaction is direct and with D2 dopamine receptor/DRD2. Interacts with PER1. As to expression, expressed in the brain.

It is found in the cytoplasm. Modulates lysosomal sorting and functional down-regulation of a variety of G-protein coupled receptors. Targets receptors for degradation in lysosomes via its interaction with BECN2. The sequence is that of G-protein coupled receptor-associated sorting protein 1 (Gprasp1) from Rattus norvegicus (Rat).